Here is a 487-residue protein sequence, read N- to C-terminus: MTQDVEMKDNQTPTQSVVSAPTSTLQNLKEIAALIDTGSYTKEVRRIARAVRLTVGLRRKLTGSVISSFLDFALVPGSEAHTRLSSFVPKSDEHDMEVDTASSNSQAPPKHLPAELEIYCYFIVLLFLIDQKKYNEAKVCSTASIARLKSVNRRTVDVIASKLYFYYSLSYELTNDLAEIRSTLLALHHSATLRHDELGQETLLNLLLRNYLHYNLYDQAEKLRSKAPRFEAHSNQQFCRYLFYLGKIRTIQLEYTDAKESLLQAARKAPVASLGFRIQCNKWAIIVRLLLGEIPERSIFTQKGMEKTLRPYFELTNAVRIGDLELFGKIQEKFAKTFAEDRTHNLIVRLRHNVIRTGLRNISISYSRISLQDVAQKLRLNSANPVADAESIVAKAIRDGAIDATIDHKNGCMVSKETGDIYSTNEPQTAFNSRIAFCLNMHNEAVRALRFPPNTHREKESEEKRREMKQQEEELAKYMAEEDDDDF.

Residues methionine 1–proline 21 form a disordered region. Over residues asparagine 10 to proline 21 the composition is skewed to polar residues. The region spanning cysteine 239–aspartate 420 is the PCI domain. Residues proline 452 to phenylalanine 487 are disordered. Positions threonine 455–alanine 480 are enriched in basic and acidic residues.

It belongs to the proteasome subunit S3 family. As to quaternary structure, component of the 19S regulatory particle (RP/PA700) lid subcomplex of the 26S proteasome. The 26S proteasome is composed of a core protease (CP), known as the 20S proteasome, capped at one or both ends by the 19S regulatory particle (RP/PA700). The RP/PA700 complex is composed of at least 17 different subunits in two subcomplexes, the base and the lid, which form the portions proximal and distal to the 20S proteolytic core, respectively. Interacts with UCH1 and UCH2. Preferentially expressed in flowers.

Functionally, acts as a regulatory subunit of the 26 proteasome which is involved in the ATP-dependent degradation of ubiquitinated proteins. This Arabidopsis thaliana (Mouse-ear cress) protein is 26S proteasome non-ATPase regulatory subunit 3 homolog B.